Reading from the N-terminus, the 146-residue chain is 3-hydroxyacyl-[acyl-carrier-protein] dehydratase FabZ (146 aa).

His46 is a catalytic residue.

It belongs to the thioester dehydratase family. FabZ subfamily.

Its subcellular location is the cytoplasm. It catalyses the reaction a (3R)-hydroxyacyl-[ACP] = a (2E)-enoyl-[ACP] + H2O. Involved in unsaturated fatty acids biosynthesis. Catalyzes the dehydration of short chain beta-hydroxyacyl-ACPs and long chain saturated and unsaturated beta-hydroxyacyl-ACPs. This chain is 3-hydroxyacyl-[acyl-carrier-protein] dehydratase FabZ, found in Acinetobacter baumannii (strain ATCC 17978 / DSM 105126 / CIP 53.77 / LMG 1025 / NCDC KC755 / 5377).